Consider the following 54-residue polypeptide: Large ribosomal subunit protein bL33 (54 aa).

The protein belongs to the bacterial ribosomal protein bL33 family.

The chain is Large ribosomal subunit protein bL33 from Legionella pneumophila (strain Lens).